We begin with the raw amino-acid sequence, 86 residues long: Cytochrome c oxidase subunit 3 (86 aa).

The Mitochondrial matrix segment spans residues 1-15 (MAHQAHSYHMVDPSP). A helical membrane pass occupies residues 16 to 34 (WPIFGAAAALLTTSGLVMW). The Mitochondrial intermembrane portion of the chain corresponds to 35 to 40 (FHYNSS). Residues 41–66 (ILLAAGLLSMLLVMLQWWREIVREST) form a helical membrane-spanning segment. Topologically, residues 67–86 (FQGHHTPTVQKGLRYGMILF) are mitochondrial matrix.

It belongs to the cytochrome c oxidase subunit 3 family. Component of the cytochrome c oxidase (complex IV, CIV), a multisubunit enzyme composed of 14 subunits. The complex is composed of a catalytic core of 3 subunits MT-CO1, MT-CO2 and MT-CO3, encoded in the mitochondrial DNA, and 11 supernumerary subunits COX4I, COX5A, COX5B, COX6A, COX6B, COX6C, COX7A, COX7B, COX7C, COX8 and NDUFA4, which are encoded in the nuclear genome. The complex exists as a monomer or a dimer and forms supercomplexes (SCs) in the inner mitochondrial membrane with NADH-ubiquinone oxidoreductase (complex I, CI) and ubiquinol-cytochrome c oxidoreductase (cytochrome b-c1 complex, complex III, CIII), resulting in different assemblies (supercomplex SCI(1)III(2)IV(1) and megacomplex MCI(2)III(2)IV(2)).

Its subcellular location is the mitochondrion inner membrane. The enzyme catalyses 4 Fe(II)-[cytochrome c] + O2 + 8 H(+)(in) = 4 Fe(III)-[cytochrome c] + 2 H2O + 4 H(+)(out). Component of the cytochrome c oxidase, the last enzyme in the mitochondrial electron transport chain which drives oxidative phosphorylation. The respiratory chain contains 3 multisubunit complexes succinate dehydrogenase (complex II, CII), ubiquinol-cytochrome c oxidoreductase (cytochrome b-c1 complex, complex III, CIII) and cytochrome c oxidase (complex IV, CIV), that cooperate to transfer electrons derived from NADH and succinate to molecular oxygen, creating an electrochemical gradient over the inner membrane that drives transmembrane transport and the ATP synthase. Cytochrome c oxidase is the component of the respiratory chain that catalyzes the reduction of oxygen to water. Electrons originating from reduced cytochrome c in the intermembrane space (IMS) are transferred via the dinuclear copper A center (CU(A)) of subunit 2 and heme A of subunit 1 to the active site in subunit 1, a binuclear center (BNC) formed by heme A3 and copper B (CU(B)). The BNC reduces molecular oxygen to 2 water molecules using 4 electrons from cytochrome c in the IMS and 4 protons from the mitochondrial matrix. The sequence is that of Cytochrome c oxidase subunit 3 (MT-CO3) from Anas platyrhynchos (Mallard).